Reading from the N-terminus, the 309-residue chain is MKAPSDMKHYLQFKDFSAQEYAYLFERAAVIKGKFKRYEKHHPLTDRTLAMIFEKASTRTRVSFEAGMYQLGGSVVHLTTGDSQLGRAEPIEDSAKVISRMVDLVMIRTYEQTKIERFAAHSRVPVINGLTNEFHPCQILADIFTFIEHRGSIQGRTVAWVGDGNNMANTWLQAAELLGFTVHVSTPSGYEVDSRVAGVAAGSHYKVFSDPLEACRGADLITTDVWTSMGYEAENEARKKAFADWCVDAEMMAAARPEALFMHCLPAHRGEEVEADVIDGPQSVVWDEAENRMHVQKALMEYLLLGQVA.

Carbamoyl phosphate is bound by residues 57-60 (STRT), Gln-84, Arg-108, and 135-138 (HPCQ). Residues Asn-166, Asp-224, and 228 to 229 (SM) contribute to the L-ornithine site. Residues 264-265 (CL) and Arg-292 contribute to the carbamoyl phosphate site.

The protein belongs to the aspartate/ornithine carbamoyltransferase superfamily. OTCase family.

Its subcellular location is the cytoplasm. It catalyses the reaction carbamoyl phosphate + L-ornithine = L-citrulline + phosphate + H(+). It participates in amino-acid biosynthesis; L-arginine biosynthesis; L-arginine from L-ornithine and carbamoyl phosphate: step 1/3. Its function is as follows. Reversibly catalyzes the transfer of the carbamoyl group from carbamoyl phosphate (CP) to the N(epsilon) atom of ornithine (ORN) to produce L-citrulline. The sequence is that of Ornithine carbamoyltransferase from Paracidovorax citrulli (strain AAC00-1) (Acidovorax citrulli).